An 841-amino-acid polypeptide reads, in one-letter code: MNIKQEDDHHHSHAHGDNHCHCGHDQEKAADAIVRDPICGMTVDPQAGKPSLGHGGRIYHFCSEHCRTKFAAAPEDYLTAKDPVCGMSVDRSTARYFLKAEGEKFYFCSAACQAKFEADPAAYRDGQRPTAKPAPKGTLYTCPMHPEVVSDRPGDCPKCGMALEPMGIPPTDEGPNPELVDFVRRLWVSAILALPLLALGMGPMLGLPLREAIGEPQATFIELLLATPVVLWAALPFFRRAWASVVNRSPNMWTLIGLGVGTAYLYSVVATLAPGIFPMSFRGHGAAVPVYFEAAAVIVALVFVGQVLELKARERTGSAIRALLDLAPKTARRIDAEGNESDVPVDDINVADRLRVRPGERVPVDGSVLEGQSTVDESMISGEPLPVEKSKGDPLTGGTINKNGTFVMSAEKVGADTVLSRIVDMVAKAQRSRAPIQGAVDRVSAVFVPAVVAVALLAFLAWAAIGPEPRMANGLLAAVAVLIIACPCALGLATPMSIMIATGRGAGEGVLIKDAEALERFSKGDTLIVDKTGTLTEGKPKLTDIAAFGRVGEDRLLSLAASLERGSEHPLAEAIVSGAEERGVPFVEVTGFEAKTGKGVQGIADGTMVALGNSAMLADLGIDPAALSEKTEALRGDGKTVMFVVFDGALAGLVAVADRIKPTTAAAIQALHDSGLKIIMATGDNERTARAVAKSLGIDEVRADVLPEGKKALIDELRSKGAIIAMAGDGVNDAPALAAADVGIAMGTGADVAMESAGITLVKGDLTGIVRARRLAEATMRNIRQNLGFAFGYNALGVPVAAGVLYPILGLLLSPMIAAAAMSLSSVSVISNALRLRFAKL.

A run of 6 helical transmembrane segments spans residues 186-206, 218-238, 256-276, 285-305, 445-465, and 474-494; these read LWVSAILALPLLALGMGPMLG, ATFIELLLATPVVLWAALPFF, IGLGVGTAYLYSVVATLAPGI, GAAVPVYFEAAAVIVALVFVG, AVFVPAVVAVALLAFLAWAAI, and GLLAAVAVLIIACPCALGLAT. The active-site 4-aspartylphosphate intermediate is Asp-530. 2 helical membrane passes run 602–622 and 638–658; these read GIADGTMVALGNSAMLADLGI and GKTVMFVVFDGALAGLVAVAD. The Mg(2+) site is built by Asp-729 and Asp-733. 2 helical membrane passes run 742–762 and 800–820; these read VGIAMGTGADVAMESAGITLV and VAAGVLYPILGLLLSPMIAAA.

It belongs to the cation transport ATPase (P-type) (TC 3.A.3) family. Type IB subfamily.

The protein localises to the cell membrane. The enzyme catalyses Cu(2+)(in) + ATP + H2O = Cu(2+)(out) + ADP + phosphate + H(+). In terms of biological role, involved in copper efflux. The polypeptide is Copper-transporting P-type ATPase (actP) (Rhizobium leguminosarum bv. viciae).